Consider the following 427-residue polypeptide: Peptidase B (427 aa).

Positions 195 and 200 each coordinate Mn(2+). Lys207 is an active-site residue. Mn(2+) contacts are provided by Asp218, Asp277, and Glu279. Arg281 is a catalytic residue.

It belongs to the peptidase M17 family. As to quaternary structure, homohexamer. Requires Mn(2+) as cofactor.

The protein resides in the cytoplasm. It catalyses the reaction Release of an N-terminal amino acid, Xaa, from a peptide or arylamide. Xaa is preferably Glu or Asp but may be other amino acids, including Leu, Met, His, Cys and Gln.. Functionally, probably plays an important role in intracellular peptide degradation. The polypeptide is Peptidase B (Escherichia coli (strain SMS-3-5 / SECEC)).